Here is a 152-residue protein sequence, read N- to C-terminus: Transcriptional regulator MraZ (152 aa).

2 SpoVT-AbrB domains span residues 5–52 and 81–124; these read ASAI…PIHE and AHEV…DEQS.

It belongs to the MraZ family. In terms of assembly, forms oligomers.

Its subcellular location is the cytoplasm. The protein resides in the nucleoid. This chain is Transcriptional regulator MraZ, found in Shewanella baltica (strain OS223).